Consider the following 303-residue polypeptide: 34 kDa antigenic protein homolog (303 aa).

4 consecutive transmembrane segments (helical) span residues 42–62 (IAVA…MFTL), 77–97 (TGLP…ALVP), 102–122 (HVTV…SATF), and 134–154 (LWVV…ALLV). Composition is skewed to low complexity over residues 194-207 (QGAQ…SPGP) and 215-255 (GYGS…HQGP). A disordered region spans residues 194–303 (QGAQQAAGLQ…QSSSPGGAPV (110 aa)). The segment covering 256–271 (STPPTGFPSFSPPPPV) has biased composition (pro residues). Residues 274–286 (GTGSQAGSAPVNY) are compositionally biased toward polar residues. The segment covering 287–303 (SNPSGGEQSSSPGGAPV) has biased composition (low complexity).

The protein to M.paratuberculosis 34 kDa antigenic protein.

The protein localises to the cell membrane. This chain is 34 kDa antigenic protein homolog, found in Mycobacterium bovis (strain ATCC BAA-935 / AF2122/97).